The primary structure comprises 330 residues: SUMO-activating enzyme subunit 1 (330 aa).

Belongs to the ubiquitin-activating E1 family. In terms of assembly, heterodimer of sae1 and sae2. The complex binds sumo via sae2.

The protein resides in the nucleus. It functions in the pathway protein modification; protein sumoylation. In terms of biological role, the dimeric enzyme acts as an E1 ligase for sumo. It mediates ATP-dependent activation of sumo and formation of a thioester with a conserved cysteine residue on sae2. The polypeptide is SUMO-activating enzyme subunit 1 (sae1) (Dictyostelium discoideum (Social amoeba)).